An 858-amino-acid chain; its full sequence is Bifunctional uridylyltransferase/uridylyl-removing enzyme (858 aa).

Residues 1–324 (MSAHAAPSPE…PATSGITRVL (324 aa)) are uridylyltransferase. The tract at residues 325–681 (SADRFVEKQG…ARPSPIGDAL (357 aa)) is uridylyl-removing. Positions 443–565 (VDQHILMVLR…VGNERYLTAL (123 aa)) constitute an HD domain. ACT domains lie at 682 to 763 (QVLV…PSKG) and 790 to 858 (ILSV…AIAV).

This sequence belongs to the GlnD family. Requires Mg(2+) as cofactor.

The enzyme catalyses [protein-PII]-L-tyrosine + UTP = [protein-PII]-uridylyl-L-tyrosine + diphosphate. It carries out the reaction [protein-PII]-uridylyl-L-tyrosine + H2O = [protein-PII]-L-tyrosine + UMP + H(+). Uridylyltransferase (UTase) activity is inhibited by glutamine, while glutamine activates uridylyl-removing (UR) activity. Functionally, modifies, by uridylylation and deuridylylation, the PII regulatory proteins (GlnB and homologs), in response to the nitrogen status of the cell that GlnD senses through the glutamine level. Under low glutamine levels, catalyzes the conversion of the PII proteins and UTP to PII-UMP and PPi, while under higher glutamine levels, GlnD hydrolyzes PII-UMP to PII and UMP (deuridylylation). Thus, controls uridylylation state and activity of the PII proteins, and plays an important role in the regulation of nitrogen assimilation and metabolism. In Burkholderia orbicola (strain AU 1054), this protein is Bifunctional uridylyltransferase/uridylyl-removing enzyme.